Reading from the N-terminus, the 191-residue chain is Rho-related GTP-binding protein RhoH (191 aa).

Position 11-18 (11-18) interacts with GTP; it reads GDSAVGKT. The Effector region signature appears at 33 to 41; the sequence is YKPTVYENT. Position 58 to 62 (58 to 62) interacts with GTP; it reads DTAGN. An interaction with ZAP70 region spans residues 73-86; the sequence is YQQADVVLMCYSVA. 116–119 is a binding site for GTP; the sequence is TQTD. C188 is subject to Cysteine methyl ester. Residue C188 is the site of S-geranylgeranyl cysteine attachment. A propeptide spans 189-191 (removed in mature form); that stretch reads KIF.

Belongs to the small GTPase superfamily. Rho family. As to quaternary structure, interacts with GDI1 and GDI2. Interacts with ZAP70 (via SH2 domains) and the interaction is enhanced by its phosphorylation by LCK. Interacts with SYK and the interaction is enhanced by its phosphorylation by FYN. Post-translationally, phosphorylated on tyrosine by LCK. Phosphorylated by FYN. Phosphorylation enhances the interactions with ZAP70 and SYK and is critical for its function in thymocyte development. As to expression, expression is widespread in hematopoietic cells, including in bone marrow progenitor cells and in differentiated myeloid as well as lymphoid cells. Expressed at high levels in the thymus and mast cells, found in spleen and low-density bone marrow (LDBM) cells and is detected at a low level in neutrophils. In the thymus it is detected in thymocytes of the thymic cortex but not in non-lymphoid cells of fibrovascular and fibroadipose tissues. Expressed in T-cells, B-cells and mast cells.

It is found in the cytoplasm. It localises to the cell membrane. Its function is as follows. Binds GTP but lacks intrinsic GTPase activity and is resistant to Rho-specific GTPase-activating proteins. Inhibits the activation of NF-kappa-B by TNF and IKKB and the activation of CRK/p38 by TNF. Inhibits activities of RAC1, RHOA and CDC42. Negatively regulates leukotriene production in neutrophils. Negative regulator of hematopoietic progenitor cell proliferation, survival and migration. Critical regulator of thymocyte development and T-cell antigen receptor (TCR) signaling by mediating recruitment and activation of ZAP70. Required for phosphorylation of CD3Z, membrane translocation of ZAP70 and subsequent activation of the ZAP70-mediated pathways. Essential for efficient beta-selection and positive selection by promoting the ZAP70-dependent phosphorylation of the LAT signalosome during pre-TCR and TCR signaling. Crucial for thymocyte maturation during DN3 to DN4 transition and during positive selection. Plays critical roles in mast cell function by facilitating phosphorylation of SYK in Fc epsilon RI-mediated signal transduction. Essential for the phosphorylation of LAT, LCP2, PLCG1 and PLCG2 and for Ca(2+) mobilization in mast cells. The chain is Rho-related GTP-binding protein RhoH (Rhoh) from Mus musculus (Mouse).